The primary structure comprises 354 residues: Guanine nucleotide-binding protein G(o) subunit alpha (354 aa).

The N-myristoyl glycine moiety is linked to residue Gly2. Cys3 is lipidated: S-palmitoyl cysteine. A G-alpha domain is found at 32–354 (KDVKLLLLGA…AYNLRGCGLY (323 aa)). The tract at residues 35–48 (KLLLLGAGESGKST) is G1 motif. GTP contacts are provided by Glu43, Lys46, Ser47, Thr48, Ser152, Leu176, Arg177, Thr178, and Arg179. Ser47 provides a ligand contact to Mg(2+). The interval 174–182 (DILRTRVKT) is G2 motif. Thr182 serves as a coordination point for Mg(2+). Positions 197 to 206 (FRLFDVGGQR) are G3 motif. Positions 266-273 (ILFLNKKD) are G4 motif. Residues Asn270, Asp273, and Cys325 each coordinate GTP. The G5 motif stretch occupies residues 324-329 (TCATDT).

This sequence belongs to the G-alpha family. G(i/o/t/z) subfamily. G proteins are composed of 3 units; alpha, beta and gamma.

The enzyme catalyses GTP + H2O = GDP + phosphate + H(+). In terms of biological role, guanine nucleotide-binding proteins (G proteins) function as transducers downstream of G protein-coupled receptors (GPCRs) in numerous signaling cascades. The alpha chain contains the guanine nucleotide binding site and alternates between an active, GTP-bound state and an inactive, GDP-bound state. Signaling by an activated GPCR promotes GDP release and GTP binding. The alpha subunit has a low GTPase activity that converts bound GTP to GDP, thereby terminating the signal. Both GDP release and GTP hydrolysis are modulated by numerous regulatory proteins. Signaling is mediated via effector proteins, such as adenylate cyclase. Inhibits adenylate cyclase activity, leading to decreased intracellular cAMP levels. This chain is Guanine nucleotide-binding protein G(o) subunit alpha (gna0), found in Xenopus laevis (African clawed frog).